The chain runs to 398 residues: Acetate kinase (398 aa).

Residue N7 participates in Mg(2+) binding. K14 serves as a coordination point for ATP. R91 is a binding site for substrate. Catalysis depends on D148, which acts as the Proton donor/acceptor. Residues 208 to 212 (HLGNG), 283 to 285 (DFR), and 331 to 335 (GIGEH) each bind ATP. E386 contacts Mg(2+).

This sequence belongs to the acetokinase family. As to quaternary structure, homodimer. It depends on Mg(2+) as a cofactor. The cofactor is Mn(2+).

The protein localises to the cytoplasm. The enzyme catalyses acetate + ATP = acetyl phosphate + ADP. Its pathway is metabolic intermediate biosynthesis; acetyl-CoA biosynthesis; acetyl-CoA from acetate: step 1/2. Catalyzes the formation of acetyl phosphate from acetate and ATP. Can also catalyze the reverse reaction. The protein is Acetate kinase of Clostridium botulinum (strain Alaska E43 / Type E3).